We begin with the raw amino-acid sequence, 577 residues long: Laccase-17 (577 aa).

The N-terminal stretch at 1–22 (MALQLLLAVFSCVLLLPQPAFG) is a signal peptide. 2 Plastocyanin-like domains span residues 30–146 (EIKM…PKRG) and 156–309 (KEVP…YEPP). N-linked (GlcNAc...) asparagine glycans are attached at residues Asn-35 and Asn-76. Residues His-80 and His-82 each contribute to the Cu cation site. Residue Asn-112 is glycosylated (N-linked (GlcNAc...) asparagine). Residues His-125 and His-127 each coordinate Cu cation. 12 N-linked (GlcNAc...) asparagine glycosylation sites follow: Asn-185, Asn-201, Asn-237, Asn-297, Asn-335, Asn-383, Asn-391, Asn-401, Asn-437, Asn-444, Asn-450, and Asn-460. Positions 427–561 (KFPWSPIVPF…RMAWLVLDGD (135 aa)) constitute a Plastocyanin-like 3 domain. Residues His-478, His-481, His-483, His-540, Cys-541, His-542, and His-546 each contribute to the Cu cation site.

Belongs to the multicopper oxidase family. Cu cation is required as a cofactor. In terms of tissue distribution, ubiquitous with higher levels in the inflorescence stem.

It localises to the secreted. The protein localises to the extracellular space. It is found in the apoplast. The enzyme catalyses 4 hydroquinone + O2 = 4 benzosemiquinone + 2 H2O. Functionally, lignin degradation and detoxification of lignin-derived products. The polypeptide is Laccase-17 (LAC17) (Arabidopsis thaliana (Mouse-ear cress)).